A 184-amino-acid chain; its full sequence is ATP synthase subunit b, chloroplastic (184 aa).

A helical membrane pass occupies residues Leu-27 to Leu-49.

Belongs to the ATPase B chain family. F-type ATPases have 2 components, F(1) - the catalytic core - and F(0) - the membrane proton channel. F(1) has five subunits: alpha(3), beta(3), gamma(1), delta(1), epsilon(1). F(0) has four main subunits: a(1), b(1), b'(1) and c(10-14). The alpha and beta chains form an alternating ring which encloses part of the gamma chain. F(1) is attached to F(0) by a central stalk formed by the gamma and epsilon chains, while a peripheral stalk is formed by the delta, b and b' chains.

The protein localises to the plastid. It localises to the chloroplast thylakoid membrane. In terms of biological role, f(1)F(0) ATP synthase produces ATP from ADP in the presence of a proton or sodium gradient. F-type ATPases consist of two structural domains, F(1) containing the extramembraneous catalytic core and F(0) containing the membrane proton channel, linked together by a central stalk and a peripheral stalk. During catalysis, ATP synthesis in the catalytic domain of F(1) is coupled via a rotary mechanism of the central stalk subunits to proton translocation. Component of the F(0) channel, it forms part of the peripheral stalk, linking F(1) to F(0). In Crucihimalaya wallichii (Rock-cress), this protein is ATP synthase subunit b, chloroplastic.